We begin with the raw amino-acid sequence, 520 residues long: Developmental regulatory protein wetA (520 aa).

Polar residues-rich tracts occupy residues 109-118, 155-165, and 378-392; these read TATHALSISP, QSFSPSLMRSS, and SSQKFDTSYTSSQVH. 3 disordered regions span residues 109–165, 378–454, and 468–496; these read TATH…MRSS, SSQK…SNKS, and KKILTGVAPSGSSKTKARREQEARDRRRK. Residues 420–429 show a composition bias toward basic residues; the sequence is PTHRRTHSRK. A compositionally biased stretch (low complexity) spans 445–454; it reads SSSSRGSNKS.

The protein belongs to the wetA family.

Functionally, brlA, abaA and wetA are pivotal regulators of conidiophore development and conidium maturation. They act individually and together to regulate their own expression and that of numerous other sporulation-specific genes. The polypeptide is Developmental regulatory protein wetA (Penicillium roqueforti (strain FM164)).